The primary structure comprises 391 residues: GTPase Obg (391 aa).

Residues 1–159 (MKFIDEALIR…RDLLLELMLL (159 aa)) form the Obg domain. Positions 160–333 (ADVGMLGLPN…LTRDIMDFIE (174 aa)) constitute an OBG-type G domain. Residues 166-173 (GLPNAGKS), 191-195 (FTTLV), 213-216 (DIPG), 283-286 (NKID), and 314-316 (SAA) each bind GTP. Mg(2+) is bound by residues Ser173 and Thr193.

It belongs to the TRAFAC class OBG-HflX-like GTPase superfamily. OBG GTPase family. Monomer. Mg(2+) is required as a cofactor.

It localises to the cytoplasm. Functionally, an essential GTPase which binds GTP, GDP and possibly (p)ppGpp with moderate affinity, with high nucleotide exchange rates and a fairly low GTP hydrolysis rate. Plays a role in control of the cell cycle, stress response, ribosome biogenesis and in those bacteria that undergo differentiation, in morphogenesis control. In Actinobacillus pleuropneumoniae serotype 5b (strain L20), this protein is GTPase Obg.